Reading from the N-terminus, the 516-residue chain is Bifunctional pantoate ligase/cytidylate kinase (516 aa).

Residues 1–279 (MVRKIFQTNA…CGSTRLIDHT (279 aa)) form a pantoate--beta-alanine ligase region. Residue 29–36 (MGGLHPGH) coordinates ATP. The Proton donor role is filled by His-36. Gln-64 contributes to the (R)-pantoate binding site. Gln-64 provides a ligand contact to beta-alanine. Residue 153 to 156 (GEKD) participates in ATP binding. Gln-159 is a binding site for (R)-pantoate. Position 190–193 (190–193 (YSSR)) interacts with ATP. The cytidylate kinase stretch occupies residues 280–516 (FLMHRKPIIA…PEEVWPTPNS (237 aa)).

This sequence in the N-terminal section; belongs to the pantothenate synthetase family. In the C-terminal section; belongs to the cytidylate kinase family. Type 1 subfamily.

The protein localises to the cytoplasm. It catalyses the reaction (R)-pantoate + beta-alanine + ATP = (R)-pantothenate + AMP + diphosphate + H(+). It carries out the reaction CMP + ATP = CDP + ADP. The catalysed reaction is dCMP + ATP = dCDP + ADP. Its pathway is cofactor biosynthesis; (R)-pantothenate biosynthesis; (R)-pantothenate from (R)-pantoate and beta-alanine: step 1/1. Its function is as follows. Catalyzes the condensation of pantoate with beta-alanine in an ATP-dependent reaction via a pantoyl-adenylate intermediate. In terms of biological role, catalyzes the transfer of a phosphate group from ATP to either CMP or dCMP to form CDP or dCDP and ADP, respectively. This chain is Bifunctional pantoate ligase/cytidylate kinase, found in Prochlorococcus marinus (strain NATL1A).